A 21-amino-acid polypeptide reads, in one-letter code: Venom peptide Tv1 (21 aa).

3 disulfides stabilise this stretch: Cys4–Cys20, Cys5–Cys21, and Cys7–Cys16.

In terms of tissue distribution, expressed by the salivary gland. This peptide is considered as a venom peptide.

Its subcellular location is the secreted. In terms of biological role, injections of 20 uM of this synthetic peptide (Ile) causes partial paralysis to polychaete worms (Nereis virens), the natural prey of terebrid snails. This paralysis may be due to an inhibition of nicotinic receptors at the neuromuscular junction. This Terebra variegata (Variegate auger snail) protein is Venom peptide Tv1.